The chain runs to 443 residues: Probable ribonuclease FAU-1 (443 aa).

Belongs to the FAU-1 family.

Functionally, probable RNase involved in rRNA stability through maturation and/or degradation of precursor rRNAs. Binds to RNA in loop regions with AU-rich sequences. This chain is Probable ribonuclease FAU-1, found in Pyrobaculum aerophilum (strain ATCC 51768 / DSM 7523 / JCM 9630 / CIP 104966 / NBRC 100827 / IM2).